We begin with the raw amino-acid sequence, 67 residues long: Large ribosomal subunit protein bL35 (67 aa).

The protein belongs to the bacterial ribosomal protein bL35 family.

This Deinococcus geothermalis (strain DSM 11300 / CIP 105573 / AG-3a) protein is Large ribosomal subunit protein bL35.